A 240-amino-acid chain; its full sequence is Guanine nucleotide exchange factor sopE2 (240 aa).

The GEF catalytic domain stretch occupies residues 78–240 (LTSKTVKDFM…IANKYLQNAS (163 aa)).

Belongs to the GEF (guanine exchange factor) SopE family.

The protein resides in the secreted. Its function is as follows. Activator for CDC42 by directly engaging this Rho GTPase and acting as potent guanine nucleotide exchange factor (GEF). This activation results in actin cytoskeleton rearrangements and stimulates membrane ruffling, promoting bacterial entry into non-phagocytic cells. Chaperone InvB is required for secretion, translocation and stabilization of intracellular levels of sopE2. This chain is Guanine nucleotide exchange factor sopE2 (sopE2), found in Salmonella paratyphi A (strain ATCC 9150 / SARB42).